Consider the following 98-residue polypeptide: Post-transcriptional regulator ComN (98 aa).

As to quaternary structure, interacts directly with DivIVA.

It is found in the cytoplasm. Its function is as follows. Required for post-transcription initiation control of the comE operon. Promotes the accumulation of its target comE mRNA to septal and polar sites. In Bacillus subtilis (strain 168), this protein is Post-transcriptional regulator ComN (comN).